The sequence spans 87 residues: MKVLVLITLAVLGAMFVWTSAAELEERGSDQRDSPAWVKSMERIFQSEERACREWLGGCSKDADCCAHLECRKKWPYHCVWDWTVRK.

Residues 1–21 (MKVLVLITLAVLGAMFVWTSA) form the signal peptide. Positions 22-50 (AELEERGSDQRDSPAWVKSMERIFQSEER) are excised as a propeptide. Cystine bridges form between C52–C66, C59–C71, and C65–C79.

It belongs to the neurotoxin 10 (Hwtx-1) family. 39 (Jztx-34) subfamily. Expressed by the venom gland.

Its subcellular location is the secreted. Its function is as follows. Potent and selective inhibitor of hNav1.7/SCN9A (IC(50)=610 nM). Also shows a weak activity towards Nav1.3/SCN3A (IC(50)=7950 nM). In addition, inhibits voltage-gated potassium channels (Kv) in rat DRG neurons. It does not alter the voltage dependence of activation, but it causes a small hyperpolarizing shift in the steady-state inactivations of Nav1.7/SNC9A. Chimera experiments show that the toxin binds to the DIIS3-S4 linker (site 4) of Nav1.7/SCN9A, whereas Nav1.7/SCN9A Asp-827 residue is shown by substitution experiments to be critical for its sensitivity. The toxin traps the domain II voltage sensor in the closed configuration, and not in an outward position. In vivo, shows analgesic activity in three rodent pain models (formalin-induced, acid-induced, and thermal). The polypeptide is Mu-theraphotoxin-Cg1a (Chilobrachys guangxiensis (Chinese earth tiger tarantula)).